Here is a 124-residue protein sequence, read N- to C-terminus: Small ribosomal subunit protein uS12 (124 aa).

The segment at 1-25 (MATINQLVRKPRQATTYKSASPALD) is disordered. Aspartate 89 carries the post-translational modification 3-methylthioaspartic acid.

It belongs to the universal ribosomal protein uS12 family. Part of the 30S ribosomal subunit. Contacts proteins S8 and S17. May interact with IF1 in the 30S initiation complex.

With S4 and S5 plays an important role in translational accuracy. Functionally, interacts with and stabilizes bases of the 16S rRNA that are involved in tRNA selection in the A site and with the mRNA backbone. Located at the interface of the 30S and 50S subunits, it traverses the body of the 30S subunit contacting proteins on the other side and probably holding the rRNA structure together. The combined cluster of proteins S8, S12 and S17 appears to hold together the shoulder and platform of the 30S subunit. This is Small ribosomal subunit protein uS12 from Xanthomonas campestris pv. campestris (strain 8004).